A 317-amino-acid polypeptide reads, in one-letter code: Zinc metalloproteinase/disintegrin (317 aa).

Residues 1–26 (EAPKMCGVTQNWESYEPIKKASQSNL) constitute a propeptide that is removed on maturation. The Peptidase M12B domain maps to 32 to 228 (RYIELVIVAD…QKPQCILNKP (197 aa)). Ca(2+)-binding residues include Glu-35 and Asp-119. 3 disulfides stabilise this stretch: Cys-143–Cys-223, Cys-183–Cys-207, and Cys-185–Cys-190. His-168 serves as a coordination point for Zn(2+). Glu-169 is an active-site residue. 2 residues coordinate Zn(2+): His-172 and His-178. Positions 223 and 226 each coordinate Ca(2+). Residues 229–244 (LRTDTVSTPVSGNELL) constitute a propeptide that is removed on maturation. In terms of domain architecture, Disintegrin spans 236 to 317 (TPVSGNELLE…AGCPRNPFHA (82 aa)). 6 disulfides stabilise this stretch: Cys-250-Cys-259, Cys-252-Cys-260, Cys-265-Cys-279, Cys-273-Cys-303, Cys-278-Cys-282, and Cys-291-Cys-310. Residues 295-297 (RGD) carry the Cell attachment site motif.

The protein belongs to the venom metalloproteinase (M12B) family. P-II subfamily. P-IIa sub-subfamily. Monomer. The cofactor is Zn(2+). Expressed by the venom gland.

Its subcellular location is the secreted. Functionally, metalloproteinase that impairs hemostasis in the envenomed animal. Its function is as follows. Inhibits GPIIb/GPIIIa (ITGA2B/ITGB3) binding to immobilized fibrinogen with an IC(50) of 2.2 nM and ADP-induced platelet aggregation with an IC(50) of 131 nM, respectively. Inhibits angiogenesis. By binding to vitronectin receptor (alpha-V/beta-3 (ITGAV/ITGB3)), also induces apoptosis of endothelial cells by blocking their attachment to extracellular matrix proteins. In terms of biological role, inhibits platelet aggregation induced by ADP (IC(50) is 30 nM), collagen (IC(50) is 500 nM), thrombin and epinephrin (IC(50) is 160 nM). In Gloydius brevicauda (Korean slamosa snake), this protein is Zinc metalloproteinase/disintegrin.